We begin with the raw amino-acid sequence, 245 residues long: ATP synthase subunit b (245 aa).

Residues 3-23 (SFNLLTIVSSIVNLLALAWII) form a helical membrane-spanning segment.

Belongs to the ATPase B chain family. As to quaternary structure, F-type ATPases have 2 components, F(1) - the catalytic core - and F(0) - the membrane proton channel. F(1) has five subunits: alpha(3), beta(3), gamma(1), delta(1), epsilon(1). F(0) has three main subunits: a(1), b(2) and c(10-14). The alpha and beta chains form an alternating ring which encloses part of the gamma chain. F(1) is attached to F(0) by a central stalk formed by the gamma and epsilon chains, while a peripheral stalk is formed by the delta and b chains.

The protein resides in the cell inner membrane. Its function is as follows. F(1)F(0) ATP synthase produces ATP from ADP in the presence of a proton or sodium gradient. F-type ATPases consist of two structural domains, F(1) containing the extramembraneous catalytic core and F(0) containing the membrane proton channel, linked together by a central stalk and a peripheral stalk. During catalysis, ATP synthesis in the catalytic domain of F(1) is coupled via a rotary mechanism of the central stalk subunits to proton translocation. Functionally, component of the F(0) channel, it forms part of the peripheral stalk, linking F(1) to F(0). The chain is ATP synthase subunit b from Dictyoglomus thermophilum (strain ATCC 35947 / DSM 3960 / H-6-12).